The primary structure comprises 80 residues: Small ribosomal subunit protein uS17c (80 aa).

It belongs to the universal ribosomal protein uS17 family. In terms of assembly, part of the 30S ribosomal subunit.

It localises to the plastid. It is found in the chloroplast. In terms of biological role, one of the primary rRNA binding proteins, it binds specifically to the 5'-end of 16S ribosomal RNA. In Gracilaria tenuistipitata var. liui (Red alga), this protein is Small ribosomal subunit protein uS17c (rps17).